The following is an 84-amino-acid chain: Exodeoxyribonuclease 7 small subunit (84 aa).

The disordered stretch occupies residues 65 to 84 (QEGDWTTSPFEPASGEPPGG).

It belongs to the XseB family. In terms of assembly, heterooligomer composed of large and small subunits.

It is found in the cytoplasm. It catalyses the reaction Exonucleolytic cleavage in either 5'- to 3'- or 3'- to 5'-direction to yield nucleoside 5'-phosphates.. In terms of biological role, bidirectionally degrades single-stranded DNA into large acid-insoluble oligonucleotides, which are then degraded further into small acid-soluble oligonucleotides. This is Exodeoxyribonuclease 7 small subunit from Syntrophobacter fumaroxidans (strain DSM 10017 / MPOB).